A 359-amino-acid polypeptide reads, in one-letter code: Probable D-xylulose reductase A (359 aa).

Zn(2+) is bound by residues cysteine 47, histidine 72, and glutamate 73. Residue 182 to 187 coordinates NAD(+); sequence GAGPVG.

Belongs to the zinc-containing alcohol dehydrogenase family. Requires Zn(2+) as cofactor.

The catalysed reaction is xylitol + NAD(+) = D-xylulose + NADH + H(+). Its pathway is carbohydrate degradation; L-arabinose degradation via L-arabinitol; D-xylulose 5-phosphate from L-arabinose (fungal route): step 4/5. Xylitol dehydrogenase which catalyzes the conversion of xylitol to D-xylulose. Xylose is a major component of hemicelluloses such as xylan. Most fungi utilize D-xylose via three enzymatic reactions, xylose reductase (XR), xylitol dehydrogenase (XDH), and xylulokinase, to form xylulose 5-phosphate, which enters pentose phosphate pathway. This chain is Probable D-xylulose reductase A (xdhA), found in Emericella nidulans (strain FGSC A4 / ATCC 38163 / CBS 112.46 / NRRL 194 / M139) (Aspergillus nidulans).